A 558-amino-acid polypeptide reads, in one-letter code: Tektin-5 (558 aa).

The stretch at 347 to 381 (ISEETDVKNKLQTQLAKILQEIFQAENTIMLLERA) forms a coiled coil.

It belongs to the tektin family. As to quaternary structure, microtubule inner protein component of sperm flagellar doublet microtubules. Interacts with TEKT3. Ubiquitinated, leading to its degradation. Deubiquitinated by USP16, promoting its stability. As to expression, specifically expressed in testis.

Its subcellular location is the cytoplasm. The protein resides in the cytoskeleton. It localises to the flagellum axoneme. Sperm-specific microtubule inner protein (MIP) part of the dynein-decorated doublet microtubules (DMTs) in flagellar axoneme. Forms an extensive interaction network in different conformations that reinforces the helix bundle composed by other tektin proteins (TEKT1 to TEKT4) and MIPs to anchor the tektin bundle onto the tubulin wall of A-tubule of the sperm flagellum. The sequence is that of Tektin-5 from Rattus norvegicus (Rat).